The sequence spans 698 residues: MGRKNRRNRQRRTEQRSPAEEERRKAREQAAWEGGYPEIIKENKLFEHYYQELKIVPDGEWDKFMDALREPLPATIRITGYKSHAKEILHCLKEKYFKELPDIEVDGQKIEAPQPLSWYPEELAWHTNLSRKIIRKSPELEKFHQFLVSETESGNISRQEAVSMIPPVLLNVQPHHKILDMCAAPGSKTAQIIEMLHADMNVPFPEGFVIANDVDNKRCYLLVHQAKRLNSPCIMVVNHDASSIPRLLIENNGSREVLYYDRILCDVPCSGDGTMRKNIDVWKKWTTLNSLQLHGLQIRIATRGVEQLAEGGRMVYSTCSLNPVEDEAVIVSLLDKSEGSLELADVASELPGLKWMPGITQWRVMTKEGQWFEKWEDVPTSRHTQIRPTMFPLKDEEKLKSMNLNRCMRILPHHQNTGGFFVAVLIKKAPMPWNKRQPKLQRRPPVSVCDASVAPEIVKAVADISAIADEPAVDAENGETKPCTNQSGSSKTDSVCCPPPSKKMKLFGFKEDPFVFLSEDDPIFEPIQKFYALDPSFPKKNLLTRTQEGKKRQLYMVSKELRNVLLHNSEKMKVINTGIKVLCRNNDGEQYGCAYRLAQEGIYSLYPFINARILTVSVEDIKVLLTQENPFLSKFSKETQKQANNLDMGSIVLKYEPDPQQPETLQCPIVLCGWRGKTSIRSFVFFLHRINLVQWIFI.

Residues 1-10 (MGRKNRRNRQ) show a composition bias toward basic residues. Positions 1–28 (MGRKNRRNRQRRTEQRSPAEEERRKARE) are disordered. Residues 11–28 (RRTEQRSPAEEERRKARE) are compositionally biased toward basic and acidic residues. S-adenosyl-L-methionine-binding positions include 182–188 (CAAPGSK), D213, D240, and D266. C319 (nucleophile) is an active-site residue. The interval 472-496 (AVDAENGETKPCTNQSGSSKTDSVC) is disordered. The segment covering 482–493 (PCTNQSGSSKTD) has biased composition (polar residues).

It belongs to the class I-like SAM-binding methyltransferase superfamily. RsmB/NOP family. TRM4 subfamily.

Its subcellular location is the nucleus. The protein localises to the nucleolus. It is found in the cytoplasm. The protein resides in the mitochondrion. It localises to the cytoskeleton. Its subcellular location is the spindle. The protein localises to the secreted. It is found in the extracellular exosome. It catalyses the reaction cytidine(48) in tRNA + S-adenosyl-L-methionine = 5-methylcytidine(48) in tRNA + S-adenosyl-L-homocysteine + H(+). The enzyme catalyses cytidine(49) in tRNA + S-adenosyl-L-methionine = 5-methylcytidine(49) in tRNA + S-adenosyl-L-homocysteine + H(+). The catalysed reaction is cytidine(50) in tRNA + S-adenosyl-L-methionine = 5-methylcytidine(50) in tRNA + S-adenosyl-L-homocysteine + H(+). It carries out the reaction cytidine(34) in tRNA precursor + S-adenosyl-L-methionine = 5-methylcytidine(34) in tRNA precursor + S-adenosyl-L-homocysteine + H(+). It catalyses the reaction a cytidine in mRNA + S-adenosyl-L-methionine = a 5-methylcytidine in mRNA + S-adenosyl-L-homocysteine + H(+). RNA cytosine C(5)-methyltransferase that methylates cytosine to 5-methylcytosine (m5C) in various RNAs, such as tRNAs, mRNAs and some long non-coding RNAs (lncRNAs). Involved in various processes, such as epidermal stem cell differentiation, testis differentiation and maternal to zygotic transition during early development: acts by increasing protein synthesis; cytosine C(5)-methylation promoting tRNA stability and preventing mRNA decay. Methylates cytosine to 5-methylcytosine (m5C) at positions 34 and 48 of intron-containing tRNA(Leu)(CAA) precursors, and at positions 48, 49 and 50 of tRNA(Gly)(GCC) precursors. tRNA methylation is required generation of RNA fragments derived from tRNAs (tRFs). Also mediates C(5)-methylation of mitochondrial tRNAs. Catalyzes cytosine C(5)-methylation of mRNAs, leading to stabilize them and prevent mRNA decay. Cytosine C(5)-methylation of mRNAs also regulates mRNA export. Also mediates cytosine C(5)-methylation of non-coding RNAs, such as vault RNAs (vtRNAs), promoting their processing into regulatory small RNAs. Required for proper spindle assembly and chromosome segregation, independently of its methyltransferase activity. This is RNA cytosine-C(5)-methyltransferase NSUN2 from Xenopus laevis (African clawed frog).